A 635-amino-acid chain; its full sequence is MINISFPDGSIKQFAKNITAYEVANAISMSLAKAAMVAEINGELQDLSIVIDNDCKLRILTAKDPECLEIIRHDAAHLTAEAVKELFPETQVTIGPAIENGYYYDFARDKPFTTDDLAVIEAKMQELSQKNEQVTRELWDRDKAVEFFKSIGEHYKAEIIASIPAGEPITLYRQGNFIDLCRGPHAPSTGVVKHFKLMKVAGAYWRGDSRNEMLQRIYGTAWATKEQLDSYLLMLEEAEKRDHRKLGRELDLFHFQEEAQGMVFWHDKGWSIYNTIEQYIRKKIRKNGYTEVKTPVLVDKSLWEASGHWEKFRDDMFALETDDKTLALKPMNCPCHVQIFKQGIKSYRDLPLRMSEFGLCHRNEASGALHGLMRVRSLVQDDAHIFCAAEQITDETVSFCKLLTEVYKDFGFTDIKVKFSDRPEIRAGSNEVWDKAENALKEAVEQAGFNYTLNPGEGAFYGPKLEFVLTDAIGRQWQCGTLQMDFVLPERLDASYVAASGEKKRPVMLHRAILGSLERFIGILIEEYAGRFPLWLAPVQVAIATITSDLNDYALEVQKALIDNGIRTDFNISPDKINYKIREFSNQKIPMIAVIGKQEQENKQVAIRRLGTTDQEVLSVEQLIAVVKEENEKYL.

The 61-residue stretch at 1-61 folds into the TGS domain; that stretch reads MINISFPDGS…DNDCKLRILT (61 aa). The interval 242-533 is catalytic; sequence DHRKLGRELD…LIEEYAGRFP (292 aa). Zn(2+) is bound by residues cysteine 333, histidine 384, and histidine 510.

It belongs to the class-II aminoacyl-tRNA synthetase family. In terms of assembly, homodimer. Zn(2+) serves as cofactor.

The protein resides in the cytoplasm. The catalysed reaction is tRNA(Thr) + L-threonine + ATP = L-threonyl-tRNA(Thr) + AMP + diphosphate + H(+). Its function is as follows. Catalyzes the attachment of threonine to tRNA(Thr) in a two-step reaction: L-threonine is first activated by ATP to form Thr-AMP and then transferred to the acceptor end of tRNA(Thr). Also edits incorrectly charged L-seryl-tRNA(Thr). This Rickettsia africae (strain ESF-5) protein is Threonine--tRNA ligase.